An 85-amino-acid polypeptide reads, in one-letter code: RNA-binding protein Hfq (85 aa).

A Sm domain is found at aspartate 9 to phenylalanine 68.

This sequence belongs to the Hfq family. Homohexamer.

Functionally, RNA chaperone that binds small regulatory RNA (sRNAs) and mRNAs to facilitate mRNA translational regulation in response to envelope stress, environmental stress and changes in metabolite concentrations. Also binds with high specificity to tRNAs. This Shewanella frigidimarina (strain NCIMB 400) protein is RNA-binding protein Hfq.